The primary structure comprises 205 residues: Small ribosomal subunit protein uS4 (205 aa).

The region spanning 110 to 172 (RRLQTIIYRK…VGSPITKEKL (63 aa)) is the S4 RNA-binding domain. Residues 173-205 (MAKPQPASAPKAAAAPKAAAAPAEAAAAPKKEE) form a disordered region. The segment covering 174-205 (AKPQPASAPKAAAAPKAAAAPAEAAAAPKKEE) has biased composition (low complexity).

It belongs to the universal ribosomal protein uS4 family. In terms of assembly, part of the 30S ribosomal subunit. Contacts protein S5. The interaction surface between S4 and S5 is involved in control of translational fidelity.

Its function is as follows. One of the primary rRNA binding proteins, it binds directly to 16S rRNA where it nucleates assembly of the body of the 30S subunit. In terms of biological role, with S5 and S12 plays an important role in translational accuracy. In Methanocella arvoryzae (strain DSM 22066 / NBRC 105507 / MRE50), this protein is Small ribosomal subunit protein uS4.